A 194-amino-acid chain; its full sequence is Calcium channel flower (194 aa).

3 consecutive transmembrane segments (helical) span residues 35–55 (LGIV…FSII), 66–88 (IIQM…VCFE), and 107–127 (GLYI…ASLF).

The protein belongs to the calcium channel flower family. In terms of assembly, homomultimer. Associates with the dally/ magu complex.

The protein localises to the cell membrane. The protein resides in the cytoplasmic vesicle. Its subcellular location is the secretory vesicle. It localises to the synaptic vesicle membrane. It is found in the presynaptic cell membrane. The protein localises to the endosome. With respect to regulation, channel activity is inhibited by La(3+), which reduces Ca(2+) influx and thus inhibits it's function in promoting activity-dependent bulk endocytosis (ADBE) in response to high stimuli. Functionally, transmembrane protein which mediates synaptic endocytosis, fitness-based cell culling, neuronal culling, morphogen gradient scaling, and calcium transport. Regulates synaptic endocytosis and hence couples exo- with endocytosis. Controls two major modes of synaptic vesicle (SV) endocytosis in the synaptic boutons of neuromuscular junctions (NMJs); Ca(2+) channel-independent Clathrin-mediated endocytosis (CME) in response to mild stimulation, and Ca(2+) channel-dependent activity-dependent bulk endocytosis (ADBE) in response to strong stimulation. Functions in ADBE and subsequent SV reformation from bulk endosomes by initiating Ca(2+) channel-dependent phosphatidylinositol 4,5-bisphosphate (PtdIns(4,5)P2) compartmentalization in synaptic boutons. There it acts at the periactive zone to provide the low Ca(2+) levels required to initiate Calcineurin activation and upregulate PtdIns(4,5)P2. Conversely PtdIns(4,5)P2 enhances fwe Ca(2+) channel-activity, establishing a positive feedback loop that induces PtdIns(4,5)P2 microdomain at the periactive zone. These microdomains trigger bulk membrane invagination (i.e. ADBE) by triggering actin polymerization while also promoting localization of fwe to bulk endosomes, thereby removing the ADBE trigger to reduce endocytosis and prevent excess membrane uptake. PtdIns(4,5)P2 then promotes SV reformation from the bulk endosomes, to coordinate ADBE and subsequent SV reformation. Different combinations of the flower isoforms at the cell membrane are also required for the identification and elimination of suboptimal or supernumerary cells during development, regeneration, and adulthood. Required for the recognition and elimination of unfit cells in the developing wing during cell competition. In the developing pupal retina, mediates the elimination of unwanted postmitotic neurons, including supernumerary photoreceptor neurons that form at the periphery of the retina and are contained within incomplete ommatidia units. Also required for efficient elimination and replacement of old neurons by newly generated neurons during regeneration in the adult brain following mechanical injury. Downstream of the flower fitness fingerprints, cells identified as unwanted or unfit are eliminated via apoptosis through the expression of ahuizotl (azot). However, the cells marked for elimination by the flower isoforms only undergo apoptosis if additional thresholds are met; (1) their neighboring fit/healthy cells express different levels of the fwe isoforms, and (2) the levels of the protective signal SPARC expressed by the loser or unwanted cells are unable to inhibit caspase activation. These additional thresholds for flower-mediated apoptosis, allows useful cells to recover from transient and limited stress before they are unnecessarily eliminated. Functions with dally and magu in a mechanism of scaling, which utilises apoptosis to ensure that the dpp morphogen gradient, which mediates organ growth, remains proportional to the size of the growing wing. In this mechanism, fwe represses dally- and Magu-dependent activity in expanding the gradient, and dally/Magu inhibits fwe-dependent apoptosis to keep cell death rate low. When the levels of these different proteins are optimally regulated the gradient correctly scales with organ growth but when this fails, fwe-mediated apoptosis is activated to trim the developing tissue to match the correct size of the gradient. This Drosophila sechellia (Fruit fly) protein is Calcium channel flower.